We begin with the raw amino-acid sequence, 539 residues long: Dihydrolipoyllysine-residue acetyltransferase component 2 of pyruvate dehydrogenase complex, mitochondrial (539 aa).

The transit peptide at 1-102 (MASRIINHSK…SSQMRSVRGF (102 aa)) directs the protein to the mitochondrion. Positions 102–122 (FSSSSDLPPHQEIGMPSLSPT) are disordered. One can recognise a Lipoyl-binding domain in the interval 111-187 (HQEIGMPSLS…QVGEVIAITV (77 aa)). Lys-152 is subject to N6-lipoyllysine. Residues 196–244 (FKDYTPSSDTGPAAPEAKPAPSLPKEEKVEKPASAPEAKISKPSSAPSE) form a disordered region. The Peripheral subunit-binding (PSBD) domain occupies 248–285 (FASPLARKLAEDNNVPLSSIKGTGPEGRIVKADVEDFL). Catalysis depends on residues His-512 and Asp-516.

This sequence belongs to the 2-oxoacid dehydrogenase family. (R)-lipoate is required as a cofactor.

The protein resides in the mitochondrion matrix. The catalysed reaction is N(6)-[(R)-dihydrolipoyl]-L-lysyl-[protein] + acetyl-CoA = N(6)-[(R)-S(8)-acetyldihydrolipoyl]-L-lysyl-[protein] + CoA. Functionally, the pyruvate dehydrogenase complex catalyzes the overall conversion of pyruvate to acetyl-CoA and CO(2). It contains multiple copies of three enzymatic components: pyruvate dehydrogenase (E1), dihydrolipoamide acetyltransferase (E2) and lipoamide dehydrogenase (E3). The chain is Dihydrolipoyllysine-residue acetyltransferase component 2 of pyruvate dehydrogenase complex, mitochondrial from Arabidopsis thaliana (Mouse-ear cress).